The following is a 403-amino-acid chain: TPR repeat-containing protein Synpcc7942_0270 (403 aa).

TPR repeat units follow at residues alanine 208–alanine 243, valine 244–lysine 282, leucine 283–alanine 316, threonine 317–aspartate 350, and proline 351–proline 387.

This chain is TPR repeat-containing protein Synpcc7942_0270, found in Synechococcus elongatus (strain ATCC 33912 / PCC 7942 / FACHB-805) (Anacystis nidulans R2).